Reading from the N-terminus, the 156-residue chain is Ribosomal RNA large subunit methyltransferase H (156 aa).

S-adenosyl-L-methionine-binding positions include Leu-73, Gly-104, and 123 to 128 (LSPLTL).

It belongs to the RNA methyltransferase RlmH family. As to quaternary structure, homodimer.

The protein resides in the cytoplasm. It carries out the reaction pseudouridine(1915) in 23S rRNA + S-adenosyl-L-methionine = N(3)-methylpseudouridine(1915) in 23S rRNA + S-adenosyl-L-homocysteine + H(+). Functionally, specifically methylates the pseudouridine at position 1915 (m3Psi1915) in 23S rRNA. The sequence is that of Ribosomal RNA large subunit methyltransferase H from Yersinia enterocolitica serotype O:8 / biotype 1B (strain NCTC 13174 / 8081).